The sequence spans 935 residues: Lon protease homolog 2, peroxisomal (935 aa).

The Lon N-terminal domain occupies 12 to 296; the sequence is LPVHRLERNL…NLRRLVEEMG (285 aa). 452–459 contributes to the ATP binding site; that stretch reads GPPGVGKT. A Lon proteolytic domain is found at 692-922; sequence QKGYGVVNGL…SDVLASVWEG (231 aa). Catalysis depends on residues S789 and K832. A Microbody targeting signal motif is present at residues 933–935; that stretch reads ARI.

Belongs to the peptidase S16 family.

The protein localises to the peroxisome matrix. The catalysed reaction is Hydrolysis of proteins in presence of ATP.. Functionally, ATP-dependent serine protease that mediates the selective degradation of misfolded and unassembled polypeptides in the peroxisomal matrix. Necessary for type 2 peroxisome targeting signal (PTS2)-containing protein processing and facilitates peroxisome matrix protein import. The protein is Lon protease homolog 2, peroxisomal (PLN) of Pichia angusta (Yeast).